Consider the following 162-residue polypeptide: Cyclic pyranopterin monophosphate synthase (162 aa).

Substrate-binding positions include 75-77 and 113-114; these read LCH and ME. Aspartate 128 is an active-site residue.

The protein belongs to the MoaC family. In terms of assembly, homohexamer; trimer of dimers.

The catalysed reaction is (8S)-3',8-cyclo-7,8-dihydroguanosine 5'-triphosphate = cyclic pyranopterin phosphate + diphosphate. Its pathway is cofactor biosynthesis; molybdopterin biosynthesis. Catalyzes the conversion of (8S)-3',8-cyclo-7,8-dihydroguanosine 5'-triphosphate to cyclic pyranopterin monophosphate (cPMP). The protein is Cyclic pyranopterin monophosphate synthase of Burkholderia cenocepacia (strain ATCC BAA-245 / DSM 16553 / LMG 16656 / NCTC 13227 / J2315 / CF5610) (Burkholderia cepacia (strain J2315)).